Here is a 315-residue protein sequence, read N- to C-terminus: Solute carrier family 25 member 32 (315 aa).

Solcar repeat units follow at residues 20-109, 118-209, and 222-306; these read HVRY…IKSY, LEAT…LKLK, and LSTV…VSHF. Helical transmembrane passes span 26–43, 89–106, 123–143, 186–203, 227–243, and 281–300; these read LIAG…LHPL, IWGA…YNAI, YLVS…PLWV, FVPG…FMAY, YISV…AATY, and GIAP…FVVY.

The protein belongs to the mitochondrial carrier (TC 2.A.29) family. Ubiquitous.

It is found in the mitochondrion inner membrane. The catalysed reaction is FAD(in) = FAD(out). Its function is as follows. Facilitates flavin adenine dinucleotide (FAD) translocation across the mitochondrial inner membrane into the mitochondrial matrix where it acts as a redox cofactor to assist flavoenzyme activities in fundamental metabolic processes including fatty acid beta-oxidation, amino acid and choline metabolism as well as mitochondrial electron transportation. In particular, provides FAD to DLD dehydrogenase of the glycine cleavage system, part of mitochondrial one-carbon metabolic pathway involved in neural tube closure in early embryogenesis. The protein is Solute carrier family 25 member 32 of Homo sapiens (Human).